We begin with the raw amino-acid sequence, 191 residues long: Molybdenum cofactor guanylyltransferase (191 aa).

GTP-binding positions include 13 to 15 (LAG), K26, D72, and D102. Mg(2+) is bound at residue D102.

This sequence belongs to the MobA family. As to quaternary structure, monomer. The cofactor is Mg(2+).

Its subcellular location is the cytoplasm. The enzyme catalyses Mo-molybdopterin + GTP + H(+) = Mo-molybdopterin guanine dinucleotide + diphosphate. Transfers a GMP moiety from GTP to Mo-molybdopterin (Mo-MPT) cofactor (Moco or molybdenum cofactor) to form Mo-molybdopterin guanine dinucleotide (Mo-MGD) cofactor. This is Molybdenum cofactor guanylyltransferase from Pseudomonas entomophila (strain L48).